A 749-amino-acid polypeptide reads, in one-letter code: uncharacterized protein (749 aa).

The region spanning 63 to 243 (FQYVQKGESI…QLTGKPMRLV (181 aa)) is the Helicase ATP-binding domain. 76 to 83 (TPTASGKT) serves as a coordination point for ATP. Positions 185-188 (DELH) match the DEVH box motif. The 155-residue stretch at 276–430 (EVNELAKEFL…SARINPENLI (155 aa)) folds into the Helicase C-terminal domain.

Belongs to the helicase family.

This is an uncharacterized protein from Bacillus subtilis (strain 168).